A 273-amino-acid polypeptide reads, in one-letter code: Shikimate kinase (273 aa).

85-95 lines the ATP pocket; sequence PVGKGLKSSSA.

Belongs to the GHMP kinase family. Archaeal shikimate kinase subfamily.

The protein resides in the cytoplasm. The catalysed reaction is shikimate + ATP = 3-phosphoshikimate + ADP + H(+). It functions in the pathway metabolic intermediate biosynthesis; chorismate biosynthesis; chorismate from D-erythrose 4-phosphate and phosphoenolpyruvate: step 5/7. This is Shikimate kinase from Pyrococcus furiosus (strain ATCC 43587 / DSM 3638 / JCM 8422 / Vc1).